We begin with the raw amino-acid sequence, 542 residues long: MERIMINPLLSIQNSPTKFLKPPLSSIHRQQQQQERQSNNNTLFMGEARPRRATTFACLSIRRRRNNNGVSEFEETARFEQVGGKGISVLCGLGYWVQGSRCFPWLALNFHMVHSLALQPSTLQLVQYSCSLPMVAKPLYGVLSDVLYIGSGRRVPYIAIGVFLQVLAWGSMGIFQGAREVLPSLVACVLLSNLGASITEVAKDALVAEYGLRYRINGLQSYALMASAAGGVLGNLLGGYLLLTTPPKISFLVFSALLSLQLVVSLSSKEESFGLPRIAETSSVLESVKKQISNLKEAIQADEISQPLIWAVVSIAMVPLLSGSVFCYQTQVLNLDPSVIGMSKVIGQLMLLCLTVVYDRYLKTLPMRPLIHIIQLLYGLSILLDYILVKQINLGFGISNEVYVLCFSSLAEILAQFKILPFAVRLASMCPQGCEGSVTSFLASTLCLSQIVSAFLGVGLANLIGITSSNYSNLSSGILIQSLAALAPLCFMHLVPMSEPVIEKEGKRGISKRSRRNRRVGRVVDKESVTYRRERESEEAQR.

The N-terminal 78 residues, 1-78 (MERIMINPLL…GVSEFEETAR (78 aa)), are a transit peptide targeting the chloroplast. Residues 24–45 (LSSIHRQQQQQERQSNNNTLFM) form a disordered region. Transmembrane regions (helical) follow at residues 103 to 123 (FPWLALNFHMVHSLALQPSTL), 132 to 152 (LPMVAKPLYGVLSDVLYIGSG), 155 to 175 (VPYIAIGVFLQVLAWGSMGIF), 181 to 201 (VLPSLVACVLLSNLGASITEV), 223 to 243 (ALMASAAGGVLGNLLGGYLLL), 246 to 266 (PPKISFLVFSALLSLQLVVSL), 308 to 328 (LIWAVVSIAMVPLLSGSVFCY), 338 to 358 (SVIGMSKVIGQLMLLCLTVVY), 369 to 389 (PLIHIIQLLYGLSILLDYILV), 404 to 424 (VLCFSSLAEILAQFKILPFAV), 446 to 466 (LCLSQIVSAFLGVGLANLIGI), and 477 to 497 (GILIQSLAALAPLCFMHLVPM). Positions 506–542 (GKRGISKRSRRNRRVGRVVDKESVTYRRERESEEAQR) are disordered. Residues 509-521 (GISKRSRRNRRVG) show a composition bias toward basic residues. A compositionally biased stretch (basic and acidic residues) spans 522–542 (RVVDKESVTYRRERESEEAQR).

It belongs to the major facilitator superfamily. Folate-biopterin transporter (TC 2.A.71) family.

The protein localises to the plastid. The protein resides in the chloroplast membrane. Functionally, could mediate folate transport. The protein is Probable folate-biopterin transporter 8, chloroplastic of Arabidopsis thaliana (Mouse-ear cress).